The following is a 256-amino-acid chain: 5-keto-4-deoxy-D-glucarate aldolase (256 aa).

His-50 functions as the Proton acceptor in the catalytic mechanism. Gln-151 serves as a coordination point for substrate. Residue Glu-153 participates in Mg(2+) binding. Residues Ser-178 and Asp-179 each contribute to the substrate site. Residue Asp-179 participates in Mg(2+) binding.

Belongs to the HpcH/HpaI aldolase family. KDGluc aldolase subfamily. Homohexamer; trimer of dimers. Mg(2+) serves as cofactor.

It carries out the reaction 5-dehydro-4-deoxy-D-glucarate = 2-hydroxy-3-oxopropanoate + pyruvate. The catalysed reaction is 2-dehydro-3-deoxy-D-glucarate = 2-hydroxy-3-oxopropanoate + pyruvate. The protein operates within carbohydrate acid metabolism; galactarate degradation; D-glycerate from galactarate: step 2/3. In terms of biological role, catalyzes the reversible retro-aldol cleavage of both 5-keto-4-deoxy-D-glucarate and 2-keto-3-deoxy-D-glucarate to pyruvate and tartronic semialdehyde. The sequence is that of 5-keto-4-deoxy-D-glucarate aldolase from Enterobacter sp. (strain 638).